A 132-amino-acid chain; its full sequence is Small ribosomal subunit protein uS8 (132 aa).

Belongs to the universal ribosomal protein uS8 family. As to quaternary structure, part of the 30S ribosomal subunit. Contacts proteins S5 and S12.

Its function is as follows. One of the primary rRNA binding proteins, it binds directly to 16S rRNA central domain where it helps coordinate assembly of the platform of the 30S subunit. This Bacillus cytotoxicus (strain DSM 22905 / CIP 110041 / 391-98 / NVH 391-98) protein is Small ribosomal subunit protein uS8.